We begin with the raw amino-acid sequence, 376 residues long: MLDLIAIRRQLHQIPEIGLEEYQTQAFLLSVIEQLCQDKPFIQIKTWKTGILVFLKGYAPEKTVAWRSDMDGLPITEETGLAFASKHQGRMHACGHDIHMTMALGLLEALVEKQSKHNMLFIFQPAEENEAGGMLMYQSGALDEWMPDEVYALHVRPDLPVGTLASNRATLFAGTCEVKVSFKGKGGHAAFPHHANDALVAASYFVTQVQTIVSRNVDPIEGAVVTFGSLHAGTTNNVISQEALLHGTIRTLTHDMSQLTQKRLTEMAEGIAKSFGLEVDVHLKQGGYLPVENNPELADELISFFKESDTINMIECLPAMTGEDFGFLLSKVKGVMFWLGVDTPYPLHHAKMSPDEGAIKQALPEIKAFLEENIED.

D69 is a catalytic residue. E128 functions as the Proton acceptor in the catalytic mechanism.

It belongs to the peptidase M20A family. N-acetyldiaminopimelate deacetylase subfamily.

The catalysed reaction is N-acetyl-(2S,6S)-2,6-diaminopimelate + H2O = (2S,6S)-2,6-diaminopimelate + acetate. It functions in the pathway amino-acid biosynthesis; L-lysine biosynthesis via DAP pathway; LL-2,6-diaminopimelate from (S)-tetrahydrodipicolinate (acetylase route): step 3/3. In terms of biological role, catalyzes the conversion of N-acetyl-diaminopimelate to diaminopimelate and acetate. This Streptococcus uberis (strain ATCC BAA-854 / 0140J) protein is N-acetyldiaminopimelate deacetylase.